A 385-amino-acid chain; its full sequence is Galactokinase (385 aa).

34 to 37 is a binding site for substrate; it reads EHTD. 124–130 lines the ATP pocket; that stretch reads SSGLSSS. 2 residues coordinate Mg(2+): Ser-130 and Glu-162. The Proton acceptor role is filled by Asp-174. Position 223 (Tyr-223) interacts with substrate.

Belongs to the GHMP kinase family. GalK subfamily.

It is found in the cytoplasm. It catalyses the reaction alpha-D-galactose + ATP = alpha-D-galactose 1-phosphate + ADP + H(+). The protein operates within carbohydrate metabolism; galactose metabolism. Catalyzes the transfer of the gamma-phosphate of ATP to D-galactose to form alpha-D-galactose-1-phosphate (Gal-1-P). This chain is Galactokinase, found in Mannheimia succiniciproducens (strain KCTC 0769BP / MBEL55E).